Consider the following 408-residue polypeptide: LL-diaminopimelate aminotransferase (408 aa).

Positions 15 and 42 each coordinate substrate. Pyridoxal 5'-phosphate is bound by residues tyrosine 72, serine 108–lysine 109, tyrosine 132, asparagine 187, tyrosine 218, and serine 246–serine 248. 3 residues coordinate substrate: lysine 109, tyrosine 132, and asparagine 187. Position 249 is an N6-(pyridoxal phosphate)lysine (lysine 249). Arginine 257 and asparagine 292 together coordinate pyridoxal 5'-phosphate. Asparagine 292 and arginine 388 together coordinate substrate.

The protein belongs to the class-I pyridoxal-phosphate-dependent aminotransferase family. LL-diaminopimelate aminotransferase subfamily. As to quaternary structure, homodimer. Pyridoxal 5'-phosphate is required as a cofactor.

It catalyses the reaction (2S,6S)-2,6-diaminopimelate + 2-oxoglutarate = (S)-2,3,4,5-tetrahydrodipicolinate + L-glutamate + H2O + H(+). Its pathway is amino-acid biosynthesis; L-lysine biosynthesis via DAP pathway; LL-2,6-diaminopimelate from (S)-tetrahydrodipicolinate (aminotransferase route): step 1/1. Its function is as follows. Involved in the synthesis of meso-diaminopimelate (m-DAP or DL-DAP), required for both lysine and peptidoglycan biosynthesis. Catalyzes the direct conversion of tetrahydrodipicolinate to LL-diaminopimelate. The protein is LL-diaminopimelate aminotransferase of Synechococcus sp. (strain RCC307).